The following is a 339-amino-acid chain: MPEHDVRLQQLTVWLDEQLNDLFRDNAWGEVPAGSLTAASSDASFRRYFRWQGAGHSFVIMDAPPPQENCRPFVAIDHLLASADVHVPLIHAQDLERGFLLLGDLGTQTYLDIINADNADGLFADAIDALLKFQRLPMDAPLPSYDDALLRREVELFPEWYVGRELGLTFTDAQKATWQRVSQLLIDSALAQPKVLVHRDYMPRNLMQSTPNPGVLDFQDAVYGPVTYDITCLFKDAFVSWPQARVEGWLGDYWQQAQAAGIPVHAEFEAFHRASDLMGVQRHLKVIGIFARICHRDGKPRYLGDVPRFFAYINEVIGRRPELAELGELIAELQAGARA.

Belongs to the kinase AmgK family.

The enzyme catalyses N-acetyl-D-muramate + ATP = N-acetyl-alpha-D-muramate 1-phosphate + ADP + H(+). It carries out the reaction N-acetyl-D-glucosamine + ATP = N-acetyl-alpha-D-glucosamine 1-phosphate + ADP + H(+). It participates in cell wall biogenesis; peptidoglycan recycling. Sugar kinase that catalyzes the ATP-dependent phosphorylation of N-acetylmuramate (MurNAc) and N-acetylglucosamine (GlcNAc) at its C1 hydroxyl group, leading to MurNAc alpha-1P and GlcNAc alpha-1P, respectively. Is involved in peptidoglycan recycling as part of a cell wall recycling pathway that bypasses de novo biosynthesis of the peptidoglycan precursor UDP-MurNAc. Plays a role in intrinsic resistance to fosfomycin, which targets the de novo synthesis of UDP-MurNAc. Is also able to use N-acetylgalactosamine (GalNAc) as a substrate, but not N-acetylmannosamine, N-deacetylated sugars or glucose. This chain is N-acetylmuramate/N-acetylglucosamine kinase, found in Pseudomonas putida (strain ATCC 47054 / DSM 6125 / CFBP 8728 / NCIMB 11950 / KT2440).